Reading from the N-terminus, the 435-residue chain is Enolase (435 aa).

Gln163 is a (2R)-2-phosphoglycerate binding site. The active-site Proton donor is the Glu205. The Mg(2+) site is built by Asp243, Glu292, and Asp319. (2R)-2-phosphoglycerate-binding residues include Lys344, Arg373, Ser374, and Lys395. The active-site Proton acceptor is the Lys344.

Belongs to the enolase family. Requires Mg(2+) as cofactor.

The protein localises to the cytoplasm. Its subcellular location is the secreted. It localises to the cell surface. It catalyses the reaction (2R)-2-phosphoglycerate = phosphoenolpyruvate + H2O. It participates in carbohydrate degradation; glycolysis; pyruvate from D-glyceraldehyde 3-phosphate: step 4/5. In terms of biological role, catalyzes the reversible conversion of 2-phosphoglycerate (2-PG) into phosphoenolpyruvate (PEP). It is essential for the degradation of carbohydrates via glycolysis. This Streptococcus pyogenes serotype M12 (strain MGAS2096) protein is Enolase.